Consider the following 104-residue polypeptide: Small ribosomal subunit protein uS10 (104 aa).

The protein belongs to the universal ribosomal protein uS10 family. As to quaternary structure, part of the 30S ribosomal subunit.

Functionally, involved in the binding of tRNA to the ribosomes. In Buchnera aphidicola subsp. Baizongia pistaciae (strain Bp), this protein is Small ribosomal subunit protein uS10.